The following is a 251-amino-acid chain: Ubiquinone/menaquinone biosynthesis C-methyltransferase UbiE (251 aa).

Residues threonine 74, aspartate 95, and asparagine 123–alanine 124 each bind S-adenosyl-L-methionine.

The protein belongs to the class I-like SAM-binding methyltransferase superfamily. MenG/UbiE family.

The catalysed reaction is a 2-demethylmenaquinol + S-adenosyl-L-methionine = a menaquinol + S-adenosyl-L-homocysteine + H(+). It catalyses the reaction a 2-methoxy-6-(all-trans-polyprenyl)benzene-1,4-diol + S-adenosyl-L-methionine = a 5-methoxy-2-methyl-3-(all-trans-polyprenyl)benzene-1,4-diol + S-adenosyl-L-homocysteine + H(+). The protein operates within quinol/quinone metabolism; menaquinone biosynthesis; menaquinol from 1,4-dihydroxy-2-naphthoate: step 2/2. It functions in the pathway cofactor biosynthesis; ubiquinone biosynthesis. Functionally, methyltransferase required for the conversion of demethylmenaquinol (DMKH2) to menaquinol (MKH2) and the conversion of 2-polyprenyl-6-methoxy-1,4-benzoquinol (DDMQH2) to 2-polyprenyl-3-methyl-6-methoxy-1,4-benzoquinol (DMQH2). The polypeptide is Ubiquinone/menaquinone biosynthesis C-methyltransferase UbiE (Shewanella halifaxensis (strain HAW-EB4)).